Here is a 320-residue protein sequence, read N- to C-terminus: Rhomboid-like protein 17, chloroplastic (320 aa).

The transit peptide at 1–87 (MHAIFSSFSR…LKFGNVMESR (87 aa)) directs the protein to the chloroplast. 5 helical membrane-spanning segments follow: residues 116–136 (WING…AVFT), 160–180 (LITS…MIGI), 199–219 (LYFA…ALLA), 247–267 (MFAI…YFAL), and 295–315 (IASS…WARI).

Belongs to the peptidase S54 family.

It localises to the plastid. The protein localises to the chloroplast membrane. Probable rhomboid-type serine protease that catalyzes intramembrane proteolysis. This Arabidopsis thaliana (Mouse-ear cress) protein is Rhomboid-like protein 17, chloroplastic.